The sequence spans 822 residues: DNA gyrase subunit A (822 aa).

Residues leucine 32 to leucine 497 form the Topo IIA-type catalytic domain. Tyrosine 120 serves as the catalytic O-(5'-phospho-DNA)-tyrosine intermediate. Positions glutamine 524–glycine 530 match the GyrA-box motif.

It belongs to the type II topoisomerase GyrA/ParC subunit family. Heterotetramer, composed of two GyrA and two GyrB chains. In the heterotetramer, GyrA contains the active site tyrosine that forms a transient covalent intermediate with DNA, while GyrB binds cofactors and catalyzes ATP hydrolysis.

The protein resides in the cytoplasm. It carries out the reaction ATP-dependent breakage, passage and rejoining of double-stranded DNA.. Its function is as follows. A type II topoisomerase that negatively supercoils closed circular double-stranded (ds) DNA in an ATP-dependent manner to modulate DNA topology and maintain chromosomes in an underwound state. Negative supercoiling favors strand separation, and DNA replication, transcription, recombination and repair, all of which involve strand separation. Also able to catalyze the interconversion of other topological isomers of dsDNA rings, including catenanes and knotted rings. Type II topoisomerases break and join 2 DNA strands simultaneously in an ATP-dependent manner. The protein is DNA gyrase subunit A of Streptococcus pneumoniae (strain ATCC BAA-255 / R6).